The primary structure comprises 479 residues: Aspartyl/glutamyl-tRNA(Asn/Gln) amidotransferase subunit B (479 aa).

This sequence belongs to the GatB/GatE family. GatB subfamily. As to quaternary structure, heterotrimer of A, B and C subunits.

The catalysed reaction is L-glutamyl-tRNA(Gln) + L-glutamine + ATP + H2O = L-glutaminyl-tRNA(Gln) + L-glutamate + ADP + phosphate + H(+). It catalyses the reaction L-aspartyl-tRNA(Asn) + L-glutamine + ATP + H2O = L-asparaginyl-tRNA(Asn) + L-glutamate + ADP + phosphate + 2 H(+). In terms of biological role, allows the formation of correctly charged Asn-tRNA(Asn) or Gln-tRNA(Gln) through the transamidation of misacylated Asp-tRNA(Asn) or Glu-tRNA(Gln) in organisms which lack either or both of asparaginyl-tRNA or glutaminyl-tRNA synthetases. The reaction takes place in the presence of glutamine and ATP through an activated phospho-Asp-tRNA(Asn) or phospho-Glu-tRNA(Gln). The protein is Aspartyl/glutamyl-tRNA(Asn/Gln) amidotransferase subunit B of Streptococcus pyogenes serotype M3 (strain ATCC BAA-595 / MGAS315).